Consider the following 574-residue polypeptide: ATP-dependent RNA helicase RhlB (574 aa).

The Q motif motif lies at 9 to 37 (VTFSSFDLHPALVAGLESAGFTRCTPIQA). A Helicase ATP-binding domain is found at 40–220 (LPVALPGGDV…YEHMNEPEKL (181 aa)). 53–60 (AQTGTGKT) contributes to the ATP binding site. The short motif at 166-169 (DEAD) is the DEAD box element. Residues 231–393 (RVRQRIYFPS…PVTSELLTPL (163 aa)) form the Helicase C-terminal domain. Basic and acidic residues predominate over residues 423 to 432 (EQRAAEEQRR). A disordered region spans residues 423 to 574 (EQRAAEEQRR…RRLRSLVSGN (152 aa)). The segment covering 435–449 (GRSGPGGGSRSGSGG) has biased composition (gly residues). Residues 477–495 (AAAAQTEKPVVAAAAAQAP) show a composition bias toward low complexity. The span at 506–515 (PRKRRRRRNG) shows a compositional bias: basic residues. Composition is skewed to low complexity over residues 523 to 535 (PAVA…APAA) and 553 to 562 (SSGSPSLLGR).

The protein belongs to the DEAD box helicase family. RhlB subfamily. In terms of assembly, component of the RNA degradosome, which is a multiprotein complex involved in RNA processing and mRNA degradation.

It localises to the cytoplasm. It catalyses the reaction ATP + H2O = ADP + phosphate + H(+). In terms of biological role, DEAD-box RNA helicase involved in RNA degradation. Has RNA-dependent ATPase activity and unwinds double-stranded RNA. The chain is ATP-dependent RNA helicase RhlB from Xanthomonas oryzae pv. oryzae (strain KACC10331 / KXO85).